The following is a 146-amino-acid chain: Snaclec 5 (146 aa).

A signal peptide spans 1–23; the sequence is MGRFIFISFGLLVVFLSLSGTEA. Cystine bridges form between Cys25-Cys36, Cys53-Cys142, and Cys119-Cys134. A C-type lectin domain is found at 32–143; the sequence is YEGHCYRVFD…CRNYGHFVCK (112 aa).

Belongs to the snaclec family. As to quaternary structure, heterodimer; disulfide-linked. Expressed by the venom gland.

It is found in the secreted. Its function is as follows. Interferes with one step of hemostasis (modulation of platelet aggregation, or coagulation cascade, for example). This chain is Snaclec 5, found in Echis pyramidum leakeyi (Leakey's carpet viper).